The primary structure comprises 203 residues: Type III effector protein HopBF1 (203 aa).

Residues 1–23 (MFNVSNNVAPSRYQGPSSTSVTP) form a disordered region. The ATP site is built by S40, Q41, K42, D107, I109, and D114. D155 is an active-site residue. Q157 contacts ATP.

This sequence belongs to the HopBF1 family.

It is found in the secreted. The protein resides in the host cell. The catalysed reaction is L-seryl-[protein] + ATP = O-phospho-L-seryl-[protein] + ADP + H(+). Its function is as follows. Effector protein that targets and inactivates the eukaryotic molecular chaperone HSP90 during infection. HopBF1 is recognized by HSP90 as a host client. As a result, HopBF1 phosphorylates HSP90, leading to the inactivation of the HSP90 ATPase activity and chaperone function. In vitro, can phosphorylate the recombinant yeast HSP82 (HSP90) and human HSP 90-beta on Ser-108. The polypeptide is Type III effector protein HopBF1 (Ewingella americana (strain ATCC 33852 / DSM 4580 / CCUG 14506 / JCM 5911 / LMG 7869 / NCTC 12157 / CDC 1468-78)).